Consider the following 546-residue polypeptide: Phosphomethylpyrimidine synthase (546 aa).

Polar residues predominate over residues 1 to 19; sequence MSTPSSRSQAPETVTTGPI. A disordered region spans residues 1–20; the sequence is MSTPSSRSQAPETVTTGPIQ. Residues Asn146, Met175, Tyr204, His240, 260-262, 301-304, and Glu340 contribute to the substrate site; these read SRG and DGLR. His344 contacts Zn(2+). Tyr367 lines the substrate pocket. His408 lines the Zn(2+) pocket. Residues Cys488, Cys491, and Cys496 each coordinate [4Fe-4S] cluster.

This sequence belongs to the ThiC family. [4Fe-4S] cluster serves as cofactor.

It catalyses the reaction 5-amino-1-(5-phospho-beta-D-ribosyl)imidazole + S-adenosyl-L-methionine = 4-amino-2-methyl-5-(phosphooxymethyl)pyrimidine + CO + 5'-deoxyadenosine + formate + L-methionine + 3 H(+). It functions in the pathway cofactor biosynthesis; thiamine diphosphate biosynthesis. In terms of biological role, catalyzes the synthesis of the hydroxymethylpyrimidine phosphate (HMP-P) moiety of thiamine from aminoimidazole ribotide (AIR) in a radical S-adenosyl-L-methionine (SAM)-dependent reaction. In Mycobacteroides abscessus (strain ATCC 19977 / DSM 44196 / CCUG 20993 / CIP 104536 / JCM 13569 / NCTC 13031 / TMC 1543 / L948) (Mycobacterium abscessus), this protein is Phosphomethylpyrimidine synthase.